Consider the following 552-residue polypeptide: Urocanate hydratase (552 aa).

NAD(+) is bound by residues 49–50 (GG), Q127, 173–175 (GMG), D193, 239–240 (NA), 260–264 (QTSAH), 270–271 (YI), and Y319. C407 is an active-site residue. Residue G489 coordinates NAD(+).

This sequence belongs to the urocanase family. It depends on NAD(+) as a cofactor.

Its subcellular location is the cytoplasm. The catalysed reaction is 4-imidazolone-5-propanoate = trans-urocanate + H2O. It functions in the pathway amino-acid degradation; L-histidine degradation into L-glutamate; N-formimidoyl-L-glutamate from L-histidine: step 2/3. Catalyzes the conversion of urocanate to 4-imidazolone-5-propionate. This is Urocanate hydratase from Bacillus cereus (strain AH187).